The sequence spans 261 residues: MTHQTHAYHMVNPSPWPLTGALSALLMTSGLIMWFHYNSMALLTLGFTTNLLTMYQWWRDVIREGTFQGHHTPIVQKGLRYGMVLFIVSEVFFFAGFFWAFYHSSLAPTPELGGCWPPTGIIPLNPLEVPLLNTSVLLASGVSITWAHHSLMEGNRKHMLQALFITISLGVYFTLLQASEYYETSFTISDGVYGSTFFMATGFHGLHVIIGSTFLIVCFLRQLYYHFTSNHHFGFEAAAWYWHFVDVVWLFLYVSIYWWGS.

Residues 1 to 15 (MTHQTHAYHMVNPSP) lie on the Mitochondrial matrix side of the membrane. Residues 16-34 (WPLTGALSALLMTSGLIMW) traverse the membrane as a helical segment. Residues 35 to 40 (FHYNSM) are Mitochondrial intermembrane-facing. The chain crosses the membrane as a helical span at residues 41-66 (ALLTLGFTTNLLTMYQWWRDVIREGT). Topologically, residues 67–72 (FQGHHT) are mitochondrial matrix. Residues 73 to 105 (PIVQKGLRYGMVLFIVSEVFFFAGFFWAFYHSS) form a helical membrane-spanning segment. At 106-128 (LAPTPELGGCWPPTGIIPLNPLE) the chain is on the mitochondrial intermembrane side. A helical membrane pass occupies residues 129 to 152 (VPLLNTSVLLASGVSITWAHHSLM). Over 153–155 (EGN) the chain is Mitochondrial matrix. The helical transmembrane segment at 156-183 (RKHMLQALFITISLGVYFTLLQASEYYE) threads the bilayer. Residues 184–190 (TSFTISD) are Mitochondrial intermembrane-facing. A helical membrane pass occupies residues 191-223 (GVYGSTFFMATGFHGLHVIIGSTFLIVCFLRQL). Topologically, residues 224–232 (YYHFTSNHH) are mitochondrial matrix. A helical membrane pass occupies residues 233 to 256 (FGFEAAAWYWHFVDVVWLFLYVSI). Over 257-261 (YWWGS) the chain is Mitochondrial intermembrane.

This sequence belongs to the cytochrome c oxidase subunit 3 family. Component of the cytochrome c oxidase (complex IV, CIV), a multisubunit enzyme composed of 14 subunits. The complex is composed of a catalytic core of 3 subunits MT-CO1, MT-CO2 and MT-CO3, encoded in the mitochondrial DNA, and 11 supernumerary subunits COX4I, COX5A, COX5B, COX6A, COX6B, COX6C, COX7A, COX7B, COX7C, COX8 and NDUFA4, which are encoded in the nuclear genome. The complex exists as a monomer or a dimer and forms supercomplexes (SCs) in the inner mitochondrial membrane with NADH-ubiquinone oxidoreductase (complex I, CI) and ubiquinol-cytochrome c oxidoreductase (cytochrome b-c1 complex, complex III, CIII), resulting in different assemblies (supercomplex SCI(1)III(2)IV(1) and megacomplex MCI(2)III(2)IV(2)).

The protein localises to the mitochondrion inner membrane. It catalyses the reaction 4 Fe(II)-[cytochrome c] + O2 + 8 H(+)(in) = 4 Fe(III)-[cytochrome c] + 2 H2O + 4 H(+)(out). Functionally, component of the cytochrome c oxidase, the last enzyme in the mitochondrial electron transport chain which drives oxidative phosphorylation. The respiratory chain contains 3 multisubunit complexes succinate dehydrogenase (complex II, CII), ubiquinol-cytochrome c oxidoreductase (cytochrome b-c1 complex, complex III, CIII) and cytochrome c oxidase (complex IV, CIV), that cooperate to transfer electrons derived from NADH and succinate to molecular oxygen, creating an electrochemical gradient over the inner membrane that drives transmembrane transport and the ATP synthase. Cytochrome c oxidase is the component of the respiratory chain that catalyzes the reduction of oxygen to water. Electrons originating from reduced cytochrome c in the intermembrane space (IMS) are transferred via the dinuclear copper A center (CU(A)) of subunit 2 and heme A of subunit 1 to the active site in subunit 1, a binuclear center (BNC) formed by heme A3 and copper B (CU(B)). The BNC reduces molecular oxygen to 2 water molecules using 4 electrons from cytochrome c in the IMS and 4 protons from the mitochondrial matrix. This Canis lupus familiaris (Dog) protein is Cytochrome c oxidase subunit 3 (MT-CO3).